Reading from the N-terminus, the 840-residue chain is Cytosolic carboxypeptidase 2 (840 aa).

Positions 358-628 constitute a Peptidase M14 domain; that stretch reads YPYTYTDLQC…HVCDTLLDFC (271 aa). The Zn(2+) site is built by His-424, Glu-427, and His-520. Catalysis depends on Glu-592, which acts as the Proton donor/acceptor. Basic residues predominate over residues 706–719; it reads MFKKKKKKSLQTRK. Disordered regions lie at residues 706-726 and 758-789; these read MFKK…EQYQ and ESSS…LDPS.

It belongs to the peptidase M14 family. In terms of assembly, interacts with RARRES1, KIF11 and MAPRE1. The cofactor is Zn(2+).

It is found in the cytoplasm. The protein resides in the cytosol. The protein localises to the cytoskeleton. It localises to the microtubule organizing center. Its subcellular location is the centrosome. It is found in the centriole. The protein resides in the cilium basal body. The enzyme catalyses (L-glutamyl)(n+1)-gamma-L-glutamyl-L-glutamyl-[protein] + H2O = (L-glutamyl)(n)-gamma-L-glutamyl-L-glutamyl-[protein] + L-glutamate. With respect to regulation, inhibited by RARRES1. Metallocarboxypeptidase that mediates deglutamylation of tubulin and non-tubulin target proteins. Catalyzes the removal of polyglutamate side chains present on the gamma-carboxyl group of glutamate residues within the C-terminal tail of tubulin protein. Specifically cleaves tubulin long-side-chains, while it is not able to remove the branching point glutamate. Also catalyzes the removal of polyglutamate residues from the carboxy-terminus of non-tubulin proteins such as MYLK. The chain is Cytosolic carboxypeptidase 2 (AGBL2) from Macaca fascicularis (Crab-eating macaque).